The sequence spans 27 residues: Defensin-like protein 1 (27 aa).

Pyrrolidone carboxylic acid is present on Gln1.

It belongs to the DEFL family. Forms oligomers in its native state.

Functionally, possesses antifungal activity sensitive to inorganic cations. This chain is Defensin-like protein 1, found in Brassica campestris (Field mustard).